We begin with the raw amino-acid sequence, 440 residues long: Adenosylhomocysteinase (440 aa).

Substrate contacts are provided by T64, D139, and E164. 165 to 167 lines the NAD(+) pocket; it reads TTT. 2 residues coordinate substrate: K194 and D198. Residues N199, 228–233, E251, N286, 307–309, and N352 each bind NAD(+); these read GFGDVG and IGH.

The protein belongs to the adenosylhomocysteinase family. Requires NAD(+) as cofactor.

It localises to the cytoplasm. It catalyses the reaction S-adenosyl-L-homocysteine + H2O = L-homocysteine + adenosine. The protein operates within amino-acid biosynthesis; L-homocysteine biosynthesis; L-homocysteine from S-adenosyl-L-homocysteine: step 1/1. May play a key role in the regulation of the intracellular concentration of adenosylhomocysteine. The chain is Adenosylhomocysteinase from Granulibacter bethesdensis (strain ATCC BAA-1260 / CGDNIH1).